Here is a 603-residue protein sequence, read N- to C-terminus: NADH-quinone oxidoreductase subunit C/D (603 aa).

The interval 1–193 is NADH dehydrogenase I subunit C; that stretch reads MVNNMTDLTA…DPFTLTKQKE (193 aa). Residues 217 to 603 are NADH dehydrogenase I subunit D; sequence DFMFLNLGPN…IDFVMSDVDR (387 aa).

The protein in the N-terminal section; belongs to the complex I 30 kDa subunit family. It in the C-terminal section; belongs to the complex I 49 kDa subunit family. In terms of assembly, NDH-1 is composed of 13 different subunits. Subunits NuoB, CD, E, F, and G constitute the peripheral sector of the complex.

It localises to the cell inner membrane. It catalyses the reaction a quinone + NADH + 5 H(+)(in) = a quinol + NAD(+) + 4 H(+)(out). NDH-1 shuttles electrons from NADH, via FMN and iron-sulfur (Fe-S) centers, to quinones in the respiratory chain. The immediate electron acceptor for the enzyme in this species is believed to be ubiquinone. Couples the redox reaction to proton translocation (for every two electrons transferred, four hydrogen ions are translocated across the cytoplasmic membrane), and thus conserves the redox energy in a proton gradient. This chain is NADH-quinone oxidoreductase subunit C/D, found in Cronobacter sakazakii (strain ATCC BAA-894) (Enterobacter sakazakii).